We begin with the raw amino-acid sequence, 510 residues long: ATP synthase subunit alpha (510 aa).

ATP is bound at residue 169 to 176; it reads GDRQTGKT.

Belongs to the ATPase alpha/beta chains family. F-type ATPases have 2 components, CF(1) - the catalytic core - and CF(0) - the membrane proton channel. CF(1) has five subunits: alpha(3), beta(3), gamma(1), delta(1), epsilon(1). CF(0) has three main subunits: a(1), b(2) and c(9-12). The alpha and beta chains form an alternating ring which encloses part of the gamma chain. CF(1) is attached to CF(0) by a central stalk formed by the gamma and epsilon chains, while a peripheral stalk is formed by the delta and b chains.

Its subcellular location is the cell membrane. The enzyme catalyses ATP + H2O + 4 H(+)(in) = ADP + phosphate + 5 H(+)(out). Produces ATP from ADP in the presence of a proton gradient across the membrane. The alpha chain is a regulatory subunit. This chain is ATP synthase subunit alpha, found in Buchnera aphidicola subsp. Schizaphis graminum (strain Sg).